Reading from the N-terminus, the 308-residue chain is Flavonol synthase 3 (308 aa).

Positions 167-267 constitute a Fe2OG dioxygenase domain; that stretch reads TIEYLMKINY…RISWPVFVES (101 aa). 175–177 is a binding site for 2-oxoglutarate; the sequence is NYY. Residues H192, D194, and H248 each coordinate Fe cation. 258 to 260 is a 2-oxoglutarate binding site; sequence RIS.

It belongs to the iron/ascorbate-dependent oxidoreductase family. Requires Fe(2+) as cofactor. Widely expressed at low levels.

The catalysed reaction is a (2R,3R)-dihydroflavonol + 2-oxoglutarate + O2 = a flavonol + succinate + CO2 + H2O. It participates in secondary metabolite biosynthesis; flavonoid biosynthesis. Functionally, catalyzes the formation of flavonols from dihydroflavonols. Possesses low activity in vitro towards dihydrokaempferol and dihydroquercetin producing kaempferol and quercitin, respectively. In Arabidopsis thaliana (Mouse-ear cress), this protein is Flavonol synthase 3.